The chain runs to 106 residues: Large ribosomal subunit protein eL42 (106 aa).

Belongs to the eukaryotic ribosomal protein eL42 family.

This Kluyveromyces lactis (strain ATCC 8585 / CBS 2359 / DSM 70799 / NBRC 1267 / NRRL Y-1140 / WM37) (Yeast) protein is Large ribosomal subunit protein eL42 (RPL44).